The sequence spans 381 residues: Succinyl-diaminopimelate desuccinylase (381 aa).

His-69 contacts Zn(2+). Asp-71 is an active-site residue. Asp-103 contacts Zn(2+). Glu-137 functions as the Proton acceptor in the catalytic mechanism. Zn(2+) is bound by residues Glu-138, Glu-166, and His-355.

Belongs to the peptidase M20A family. DapE subfamily. As to quaternary structure, homodimer. It depends on Zn(2+) as a cofactor. Requires Co(2+) as cofactor.

It catalyses the reaction N-succinyl-(2S,6S)-2,6-diaminopimelate + H2O = (2S,6S)-2,6-diaminopimelate + succinate. It functions in the pathway amino-acid biosynthesis; L-lysine biosynthesis via DAP pathway; LL-2,6-diaminopimelate from (S)-tetrahydrodipicolinate (succinylase route): step 3/3. In terms of biological role, catalyzes the hydrolysis of N-succinyl-L,L-diaminopimelic acid (SDAP), forming succinate and LL-2,6-diaminopimelate (DAP), an intermediate involved in the bacterial biosynthesis of lysine and meso-diaminopimelic acid, an essential component of bacterial cell walls. This chain is Succinyl-diaminopimelate desuccinylase, found in Rickettsia africae (strain ESF-5).